Consider the following 693-residue polypeptide: Polyphosphate kinase (693 aa).

An ATP-binding site is contributed by Asn-57. Residues Arg-383 and Arg-413 each coordinate Mg(2+). The active-site Phosphohistidine intermediate is His-443. Tyr-476, Arg-572, and His-601 together coordinate ATP.

The protein belongs to the polyphosphate kinase 1 (PPK1) family. Mg(2+) serves as cofactor. Post-translationally, an intermediate of this reaction is the autophosphorylated ppk in which a phosphate is covalently linked to a histidine residue through a N-P bond.

It carries out the reaction [phosphate](n) + ATP = [phosphate](n+1) + ADP. Catalyzes the reversible transfer of the terminal phosphate of ATP to form a long-chain polyphosphate (polyP). The protein is Polyphosphate kinase of Acinetobacter baumannii (strain ATCC 17978 / DSM 105126 / CIP 53.77 / LMG 1025 / NCDC KC755 / 5377).